We begin with the raw amino-acid sequence, 350 residues long: tRNA pseudouridine synthase D (350 aa).

Phe-27 lines the substrate pocket. Asp-80 functions as the Nucleophile in the catalytic mechanism. Asn-129 lines the substrate pocket. A TRUD domain is found at 155-303; that stretch reads GVPNYFGVQR…VDTTRRAINL (149 aa). Phe-329 contacts substrate.

The protein belongs to the pseudouridine synthase TruD family.

The enzyme catalyses uridine(13) in tRNA = pseudouridine(13) in tRNA. Responsible for synthesis of pseudouridine from uracil-13 in transfer RNAs. The sequence is that of tRNA pseudouridine synthase D from Proteus mirabilis (strain HI4320).